Here is a 134-residue protein sequence, read N- to C-terminus: Bet1-like protein At1g29060 (134 aa).

A compositionally biased stretch (gly residues) spans 1–12 (MASNRGAGGSLY). The disordered stretch occupies residues 1–31 (MASNRGAGGSLYGGADPYRSREGLSTRNASG). Over 1 to 110 (MASNRGAGGS…LSIIRSGNNH (110 aa)) the chain is Cytoplasmic. Positions 40–102 (DPMHSDLDDE…KNNIRKLNLS (63 aa)) constitute a t-SNARE coiled-coil homology domain. The helical; Anchor for type IV membrane protein transmembrane segment at 111–131 (IMHVVLFALLLFFILYMWSKM) threads the bilayer. Residues 132–134 (FKR) lie on the Vesicular side of the membrane.

This sequence belongs to the BET1 family.

The protein resides in the golgi apparatus membrane. Its subcellular location is the endoplasmic reticulum membrane. In terms of biological role, required for vesicular transport from the ER to the Golgi complex. Functions as a SNARE associated with ER-derived vesicles. The protein is Bet1-like protein At1g29060 of Arabidopsis thaliana (Mouse-ear cress).